Here is a 75-residue protein sequence, read N- to C-terminus: Brevinin-2SN2 (75 aa).

The first 22 residues, 1-22 (MFTLKKPLLFLFFLGTISLSFC), serve as a signal peptide directing secretion. Positions 23 to 40 (EEERGADEDDGGEMTEEE) are cleaved as a propeptide — removed in mature form. Residues Cys69 and Cys75 are joined by a disulfide bond.

It belongs to the frog skin active peptide (FSAP) family. Brevinin subfamily. Expressed by the skin glands.

Its subcellular location is the secreted. Its function is as follows. Antimicrobial peptide. Active against some Gram-negative and a variety of Gram-positive bacterial strains. Active against fungus C.glabrata 090902 but not against C.albicans ATCC 10231. Shows hemolytic activity against human erythrocytes. The protein is Brevinin-2SN2 of Sylvirana spinulosa (Fine-spined frog).